The primary structure comprises 353 residues: 4-hydroxy-3-methylbut-2-en-1-yl diphosphate synthase (flavodoxin) (353 aa).

[4Fe-4S] cluster is bound by residues Cys268, Cys271, Cys303, and Glu310.

This sequence belongs to the IspG family. [4Fe-4S] cluster serves as cofactor.

The enzyme catalyses (2E)-4-hydroxy-3-methylbut-2-enyl diphosphate + oxidized [flavodoxin] + H2O + 2 H(+) = 2-C-methyl-D-erythritol 2,4-cyclic diphosphate + reduced [flavodoxin]. It functions in the pathway isoprenoid biosynthesis; isopentenyl diphosphate biosynthesis via DXP pathway; isopentenyl diphosphate from 1-deoxy-D-xylulose 5-phosphate: step 5/6. Converts 2C-methyl-D-erythritol 2,4-cyclodiphosphate (ME-2,4cPP) into 1-hydroxy-2-methyl-2-(E)-butenyl 4-diphosphate. In Ruminiclostridium cellulolyticum (strain ATCC 35319 / DSM 5812 / JCM 6584 / H10) (Clostridium cellulolyticum), this protein is 4-hydroxy-3-methylbut-2-en-1-yl diphosphate synthase (flavodoxin).